Consider the following 64-residue polypeptide: Lantipeptide Flvbeta.d (64 aa).

Residues 1-31 constitute a propeptide, cleaved by FlvT; sequence MDNNTEKFNELAAIADESELNEMLDENITGA. The lanthionine (Ser-Cys); by FlvM2 cross-link spans 33-37; it reads STIQC. 2,3-didehydrobutyrine; by FlvM2 occurs at positions 34 and 41. 3 consecutive cross-links (beta-methyllanthionine (Thr-Cys); by FlvM2) follow at residues 44–52, 55–58, and 59–62; these read TILSVVFDC, TSAC, and TPPC. A cross-link (lanthionine (Ser-Cys); by FlvM2) is located at residues 47 to 53; sequence SVVFDCC.

Contains LL-lanthionine, DL-lanthionine, and DL-beta-methyllanthionine, when coepressed in E.coli with the flavecin synthetase FlvM2.

Its subcellular location is the secreted. Lanthionine-containing peptide that does probably not show antibacterial activity, since its analog [+2]Flvbeta.d does not show antibacterial activity against M.luteus. Also does not show antibiotic activity when tested with [Del2]Flvalpha.a, an analog of Flvalpha.a, which is encoded by the same operon than Flvbeta.d. The bactericidal activity of lantibiotics is based on depolarization of energized bacterial cytoplasmic membranes, initiated by the formation of aqueous transmembrane pores. In Ruminococcus flavefaciens, this protein is Lantipeptide Flvbeta.d.